The sequence spans 695 residues: MEEKPGQPQPQHHHSHHHPHHHPQQQQQQPHHHHHYYFYNHSHNHHHHHHHQQPHQYLQHGAEGSPKAQPKPLKHEQKHTLQQHQETPKKKTGYGELNGNAGEREISLKNLSSDEATNPISRVLNGNQQVVDTSLKQTVKANTFGKAGIKTKNFIQKNSMDKKNGKSYENKSGENQSVDKSDTIPIPNGVVTNNSGYITNGYMGKGADNDGSGSESGYTTPKKRKARRNSAKGCENLNIVQDKIMQQETSVPTLKQGLETFKPDYSEQKGNRVDGSKPIWKYETGPGGTSRGKPAVGDMLRKSSDSKPGVSSKKFDDRPKGKHASAVASKEDSWTLFKPPPVFPVDNSSAKIVPKISYASKVKENLNKTIQNSSVSPTSSSSSSSSTGETQTQSSSRLSQVPMSALKSVTSANFSNGPVLAGTDGNVYPPGGQPLLTTAANTLTPISSGTDSVLQDMSLTSAAVEQIKTSLFIYPSNMQTMLLSTAQVDLPSQTDQQNLGDIFQNQWGLSFINEPSAGPETVTGKSSEHKVMEVTFQGEYPATLVSQGAEIIPSGTEHPVFPKAYELEKRTSPQVLGSILKSGTTSESGALSLEPSHIGDLQKADTSSQGALVFLSKDYEIESQNPLASPTNTLLGSAKEQRYQRGLERNDSWGSFDLRAAIVYHTKEMESIWNLQKQDPKRIITYNEAMDSPDQ.

A disordered region spans residues 1-100 (MEEKPGQPQP…KTGYGELNGN (100 aa)). 2 stretches are compositionally biased toward basic residues: residues 11–23 (QHHH…HHHP) and 30–53 (PHHH…HHQQ). A Glycyl lysine isopeptide (Lys-Gly) (interchain with G-Cter in SUMO2) cross-link involves residue Lys78. The residue at position 87 (Thr87) is a Phosphothreonine. Lys109 is covalently cross-linked (Glycyl lysine isopeptide (Lys-Gly) (interchain with G-Cter in SUMO2)). Residues Ser112 and Ser113 each carry the phosphoserine modification. Residues Lys136, Lys146, Lys157, and Lys171 each participate in a glycyl lysine isopeptide (Lys-Gly) (interchain with G-Cter in SUMO2) cross-link. Disordered stretches follow at residues 155–189 (IQKN…IPNG), 204–234 (GKGA…AKGC), 261–341 (FKPD…KPPP), and 369–402 (TIQN…SQVP). A compositionally biased stretch (basic and acidic residues) spans 159 to 182 (SMDKKNGKSYENKSGENQSVDKSD). A phosphoserine mark is found at Ser212 and Ser214. A Phosphotyrosine modification is found at Tyr218. Thr219 and Thr220 each carry phosphothreonine. Positions 221 to 230 (PKKRKARRNS) are enriched in basic residues. Over residues 261 to 275 (FKPDYSEQKGNRVDG) the composition is skewed to basic and acidic residues. Residues Lys262 and Lys281 each participate in a glycyl lysine isopeptide (Lys-Gly) (interchain with G-Cter in SUMO2) cross-link. Arg291 carries the post-translational modification Omega-N-methylarginine. Residue Lys293 forms a Glycyl lysine isopeptide (Lys-Gly) (interchain with G-Cter in SUMO2) linkage. Residue Ser304 is modified to Phosphoserine. A Glycyl lysine isopeptide (Lys-Gly) (interchain with G-Cter in SUMO2) cross-link involves residue Lys307. Low complexity predominate over residues 373-396 (SSVSPTSSSSSSSSTGETQTQSSS). Ser376 carries the phosphoserine modification. A Phosphothreonine modification is found at Thr571. Ser572, Ser592, Ser608, and Ser629 each carry phosphoserine. Residue Thr633 is modified to Phosphothreonine. 4 positions are modified to phosphoserine: Ser637, Ser652, Ser655, and Ser692.

In terms of assembly, interacts with FMR1 (via N-terminus). Interacts with DDX6.

The protein resides in the nucleus. The protein localises to the cytoplasm. It is found in the stress granule. Binds RNA. This Homo sapiens (Human) protein is FMR1-interacting protein NUFIP2.